Reading from the N-terminus, the 414-residue chain is Tyrosine--tRNA ligase (414 aa).

Residues 57–66 (PSAPDVHIGH) carry the 'HIGH' region motif. A 'KMSKS' region motif is present at residues 241–245 (KMSKS). K244 is an ATP binding site. Residues 352–413 (VPLIDLLVTL…GKRKFAKLSL (62 aa)) enclose the S4 RNA-binding domain.

It belongs to the class-I aminoacyl-tRNA synthetase family. TyrS type 2 subfamily. In terms of assembly, homodimer.

It is found in the cytoplasm. It catalyses the reaction tRNA(Tyr) + L-tyrosine + ATP = L-tyrosyl-tRNA(Tyr) + AMP + diphosphate + H(+). Functionally, catalyzes the attachment of tyrosine to tRNA(Tyr) in a two-step reaction: tyrosine is first activated by ATP to form Tyr-AMP and then transferred to the acceptor end of tRNA(Tyr). The chain is Tyrosine--tRNA ligase from Shouchella clausii (strain KSM-K16) (Alkalihalobacillus clausii).